The sequence spans 325 residues: Glutarate 2-hydroxylase (325 aa).

Residues histidine 160, aspartate 162, and histidine 292 each coordinate Fe cation.

Belongs to the glutarate hydroxylase family. In terms of assembly, homotetramer. It depends on Fe(2+) as a cofactor.

It catalyses the reaction glutarate + 2-oxoglutarate + O2 = (S)-2-hydroxyglutarate + succinate + CO2. It functions in the pathway amino-acid degradation. Functionally, acts as an alpha-ketoglutarate-dependent dioxygenase catalyzing hydroxylation of glutarate (GA) to L-2-hydroxyglutarate (L2HG). Functions in a L-lysine degradation pathway that proceeds via cadaverine, glutarate and L-2-hydroxyglutarate. This chain is Glutarate 2-hydroxylase, found in Escherichia coli (strain UTI89 / UPEC).